A 284-amino-acid chain; its full sequence is L-ribulose-5-phosphate 3-epimerase UlaE (284 aa).

Belongs to the L-ribulose-5-phosphate 3-epimerase family.

The catalysed reaction is L-ribulose 5-phosphate = L-xylulose 5-phosphate. Its pathway is cofactor degradation; L-ascorbate degradation; D-xylulose 5-phosphate from L-ascorbate: step 3/4. Functionally, catalyzes the isomerization of L-xylulose-5-phosphate to L-ribulose-5-phosphate. Is involved in the anaerobic L-ascorbate utilization. The sequence is that of L-ribulose-5-phosphate 3-epimerase UlaE from Salmonella heidelberg (strain SL476).